Consider the following 212-residue polypeptide: Large ribosomal subunit protein bL25 (212 aa).

The interval leucine 181 to glutamate 212 is disordered. Positions valine 188–serine 197 are enriched in acidic residues.

This sequence belongs to the bacterial ribosomal protein bL25 family. CTC subfamily. As to quaternary structure, part of the 50S ribosomal subunit; part of the 5S rRNA/L5/L18/L25 subcomplex. Contacts the 5S rRNA. Binds to the 5S rRNA independently of L5 and L18.

Its function is as follows. This is one of the proteins that binds to the 5S RNA in the ribosome where it forms part of the central protuberance. The chain is Large ribosomal subunit protein bL25 from Finegoldia magna (strain ATCC 29328 / DSM 20472 / WAL 2508) (Peptostreptococcus magnus).